The sequence spans 83 residues: Large ribosomal subunit protein eL31 (83 aa).

This sequence belongs to the eukaryotic ribosomal protein eL31 family.

The chain is Large ribosomal subunit protein eL31 from Methanococcus maripaludis (strain DSM 14266 / JCM 13030 / NBRC 101832 / S2 / LL).